The primary structure comprises 71 residues: SPI-2 type 3 secretion system needle filament protein (71 aa).

It belongs to the SctF family. As to quaternary structure, the core secretion machinery of the T3SS is composed of approximately 20 different proteins, including cytoplasmic components, a base, an export apparatus and a needle. This subunit polymerizes and forms the helical needle filament.

It localises to the secreted. The protein localises to the cell surface. Functionally, component of the type III secretion system (T3SS), also called injectisome, which is used to inject bacterial effector proteins into eukaryotic host cells. SsaG/SctF2 forms the external needle filament that protrudes from the bacterial surface. During infection, can induce innate immune responses. The needle proteins interact with host TLR2 or TLR4, and induce signaling by NF-kappa-B and/or AP-1. This activation is MyD88 dependent and results in increased expression of cytokines, including TNF-alpha, IL-6 and IL-8. This Salmonella typhimurium (strain LT2 / SGSC1412 / ATCC 700720) protein is SPI-2 type 3 secretion system needle filament protein.